The primary structure comprises 288 residues: Tryptophan 2,3-dioxygenase (288 aa).

Residues 57 to 61, Tyr119, and Arg123 each bind substrate; that span reads FIIQH. His246 contributes to the heme binding site. Residue Thr260 participates in substrate binding.

This sequence belongs to the tryptophan 2,3-dioxygenase family. As to quaternary structure, homotetramer. The cofactor is heme.

It carries out the reaction L-tryptophan + O2 = N-formyl-L-kynurenine. It functions in the pathway amino-acid degradation; L-tryptophan degradation via kynurenine pathway; L-kynurenine from L-tryptophan: step 1/2. Its function is as follows. Heme-dependent dioxygenase that catalyzes the oxidative cleavage of the L-tryptophan (L-Trp) pyrrole ring and converts L-tryptophan to N-formyl-L-kynurenine. Catalyzes the oxidative cleavage of the indole moiety. The sequence is that of Tryptophan 2,3-dioxygenase from Pseudomonas aeruginosa (strain ATCC 15692 / DSM 22644 / CIP 104116 / JCM 14847 / LMG 12228 / 1C / PRS 101 / PAO1).